The following is a 244-amino-acid chain: HTH-type transcriptional regulator RdgA (244 aa).

One can recognise an HTH cro/C1-type domain in the interval 9–62 (LKTARTAQGLSQKALGDMIGVSQAAIQKIEVGKASQTTKIVELSNNLRVRPEWL). The H-T-H motif DNA-binding region spans 20–39 (QKALGDMIGVSQAAIQKIEV).

In terms of biological role, regulates pectin lyase production in response to DNA damage. The sequence is that of HTH-type transcriptional regulator RdgA (rdgA) from Pectobacterium carotovorum subsp. carotovorum (Erwinia carotovora subsp. carotovora).